Here is a 197-residue protein sequence, read N- to C-terminus: Putative peptidyl-prolyl cis-trans isomerase (197 aa).

Residues 14–195 form the PPIase cyclophilin-type domain; it reads NEIKVVMHTN…YDVVIESIDV (182 aa).

It belongs to the cyclophilin-type PPIase family.

The catalysed reaction is [protein]-peptidylproline (omega=180) = [protein]-peptidylproline (omega=0). PPIases accelerate the folding of proteins. It catalyzes the cis-trans isomerization of proline imidic peptide bonds in oligopeptides. The sequence is that of Putative peptidyl-prolyl cis-trans isomerase from Staphylococcus epidermidis (strain ATCC 35984 / DSM 28319 / BCRC 17069 / CCUG 31568 / BM 3577 / RP62A).